The following is a 312-amino-acid chain: Malate dehydrogenase (312 aa).

Residues 7–13 and Asp-34 each bind NAD(+); that span reads GAAGGIG. Residues Arg-81 and Arg-87 each coordinate substrate. NAD(+) is bound by residues Asn-94 and 117–119; that span reads ITN. Residues Asn-119 and Arg-153 each contribute to the substrate site. The active-site Proton acceptor is the His-177. Residue Met-227 participates in NAD(+) binding.

Belongs to the LDH/MDH superfamily. MDH type 1 family. In terms of assembly, homodimer.

It catalyses the reaction (S)-malate + NAD(+) = oxaloacetate + NADH + H(+). Functionally, catalyzes the reversible oxidation of malate to oxaloacetate. This is Malate dehydrogenase from Photobacterium profundum (strain SS9).